An 896-amino-acid polypeptide reads, in one-letter code: Histone-lysine N-methyltransferase CLF (896 aa).

Disordered stretches follow at residues 344–419 and 459–514; these read DNLK…NRRI and SGIK…DGCD. Residues 358-390 show a composition bias toward low complexity; the sequence is GSSGQKTKSQQSESSSTARVSSESSESEVQLLS. 3 stretches are compositionally biased toward polar residues: residues 391–400, 465–476, and 485–498; these read NKSPQHSPGL, VVSSQCNSPSTR, and QMEN…AQSD. Over residues 504-514 the composition is skewed to basic and acidic residues; sequence NNEHSATDGCD. Positions 633–732 constitute a CXC domain; it reads RKRITERKDQ…TLGVPNQRGD (100 aa). In terms of domain architecture, SET spans 747–862; it reads QRVLLGRSDV…AGEELFYDYR (116 aa). Residue Y861 participates in S-adenosyl-L-methionine binding. The segment covering 869-884 has biased composition (basic and acidic residues); it reads PAWARKPEGPGAKDDA. A disordered region spans residues 869 to 896; sequence PAWARKPEGPGAKDDAQPSTGRAKKLAH.

The protein belongs to the class V-like SAM-binding methyltransferase superfamily. Histone-lysine methyltransferase family. EZ subfamily. As to quaternary structure, interacts with FIE1. Component of the polycomb repressive complex 2 (PRC2), composed of the core PRC2 components FIE2, EMF2B and EZ1. PRC2 methylates 'Lys-27' residues of histone H3 (H3K27me3), leading to transcriptional repression of the affected target gene. Widely expressed. Highly expressed in young panicle.

The enzyme catalyses L-lysyl(27)-[histone H3] + 3 S-adenosyl-L-methionine = N(6),N(6),N(6)-trimethyl-L-lysyl(27)-[histone H3] + 3 S-adenosyl-L-homocysteine + 3 H(+). In terms of biological role, polycomb group (PcG) protein. Catalytic subunit of some PcG multiprotein complex, which methylates 'Lys-27' of histone H3, leading to transcriptional repression of the affected target genes. PcG proteins act by forming multiprotein complexes, which are required to maintain the transcriptionally repressive state of homeotic genes throughout development. PcG proteins are not required to initiate repression, but to maintain it during later stages of development. Involved in the regulation of flowering. Represses flowering under long day (LD) conditions. Regulates the trimethylation on histone H3 'Lys-27' (H3K27me3) of the flowering regulators MADS14, MADS15, RFT1, EHD1, HD3A and LF. This is Histone-lysine N-methyltransferase CLF from Oryza sativa subsp. japonica (Rice).